A 230-amino-acid chain; its full sequence is Sugar fermentation stimulation protein homolog (230 aa).

Belongs to the SfsA family.

The protein is Sugar fermentation stimulation protein homolog of Clostridium perfringens (strain 13 / Type A).